The following is a 97-amino-acid chain: Large ribosomal subunit protein uL23 (97 aa).

This sequence belongs to the universal ribosomal protein uL23 family. As to quaternary structure, part of the 50S ribosomal subunit. Contacts protein L29, and trigger factor when it is bound to the ribosome.

Its function is as follows. One of the early assembly proteins it binds 23S rRNA. One of the proteins that surrounds the polypeptide exit tunnel on the outside of the ribosome. Forms the main docking site for trigger factor binding to the ribosome. The chain is Large ribosomal subunit protein uL23 from Anaeromyxobacter dehalogenans (strain 2CP-1 / ATCC BAA-258).